The following is a 241-amino-acid chain: Large ribosomal subunit protein uL2 (241 aa).

Positions 201 to 241 (VDHPHGGGNRQHPGRPTTVSRHAPPGRKVGSIAAKRTGLKR) are disordered.

This sequence belongs to the universal ribosomal protein uL2 family. As to quaternary structure, part of the 50S ribosomal subunit. Forms a bridge to the 30S subunit in the 70S ribosome.

In terms of biological role, one of the primary rRNA binding proteins. Required for association of the 30S and 50S subunits to form the 70S ribosome, for tRNA binding and peptide bond formation. It has been suggested to have peptidyltransferase activity; this is somewhat controversial. Makes several contacts with the 16S rRNA in the 70S ribosome. In Methanobrevibacter smithii (strain ATCC 35061 / DSM 861 / OCM 144 / PS), this protein is Large ribosomal subunit protein uL2.